The sequence spans 713 residues: Polyribonucleotide nucleotidyltransferase (713 aa).

Mg(2+) is bound by residues aspartate 485 and aspartate 491. The KH domain occupies 552 to 611; that stretch reads PRIYTMKIDPKKIKDVIGKGGATVRSLTEETGTSIDIDDDGTVKIAAVDKNAVQEVMSRI. One can recognise an S1 motif domain in the interval 621-689; the sequence is GVVYKGKVTR…RQGRIRLTMK (69 aa). Residues 694-713 are disordered; sequence DQTKNEENLLQSEEGSPVQE. Over residues 701–713 the composition is skewed to polar residues; it reads NLLQSEEGSPVQE.

It belongs to the polyribonucleotide nucleotidyltransferase family. Component of the RNA degradosome, which is a multiprotein complex involved in RNA processing and mRNA degradation. The cofactor is Mg(2+).

The protein localises to the cytoplasm. It catalyses the reaction RNA(n+1) + phosphate = RNA(n) + a ribonucleoside 5'-diphosphate. Functionally, involved in mRNA degradation. Catalyzes the phosphorolysis of single-stranded polyribonucleotides processively in the 3'- to 5'-direction. The protein is Polyribonucleotide nucleotidyltransferase of Histophilus somni (strain 2336) (Haemophilus somnus).